A 210-amino-acid chain; its full sequence is Thymidylate kinase (210 aa).

Position 9-16 (9-16 (GLEGAGKS)) interacts with ATP.

It belongs to the thymidylate kinase family.

It carries out the reaction dTMP + ATP = dTDP + ADP. Phosphorylation of dTMP to form dTDP in both de novo and salvage pathways of dTTP synthesis. In Aliivibrio salmonicida (strain LFI1238) (Vibrio salmonicida (strain LFI1238)), this protein is Thymidylate kinase.